Consider the following 114-residue polypeptide: MRLLILALLGICSLTAYIVEGVGSEVSDKRTCVSLTTQRLPVSRIKTYTITEGSLRAVIFITKRGLKVCADPQATWVRDVVRSMDRKSNTRNNMIQTKPTGTQQSTNTAVTLTG.

Positions 1-21 (MRLLILALLGICSLTAYIVEG) are cleaved as a signal peptide. The cysteines at positions 32 and 69 are disulfide-linked. Positions 91-114 (RNNMIQTKPTGTQQSTNTAVTLTG) are disordered.

It belongs to the intercrine gamma family. In terms of tissue distribution, highest level in spleen, lower in peripheral leukocytes and very low levels in lung, colon and small intestine.

Its subcellular location is the secreted. Chemotactic activity for lymphocytes but not for monocytes or neutrophils. In thymus, mediates medullary accumulation of thymic dendritic cells and contributes to regulatoy T cell development, playing a role in self-tolerance establishment. The sequence is that of Lymphotactin (XCL1) from Homo sapiens (Human).